A 565-amino-acid chain; its full sequence is Periplasmic trehalase (565 aa).

A signal peptide spans 1–30; it reads MKSPAPSRPQKMALIPACIFLCFAALSVQA. Substrate is bound by residues Arg152, 159 to 160, Asn196, 205 to 207, 277 to 279, and Gly310; these read WD, RSQ, and RPE. Catalysis depends on proton donor/acceptor residues Asp312 and Glu496. Residue Glu511 participates in substrate binding. The disordered stretch occupies residues 540-565; the sequence is DNVPATHPTVKSATTQPSTKEAQPTP. The segment covering 548–565 has biased composition (polar residues); that stretch reads TVKSATTQPSTKEAQPTP.

Belongs to the glycosyl hydrolase 37 family. Monomer.

It localises to the periplasm. The enzyme catalyses alpha,alpha-trehalose + H2O = alpha-D-glucose + beta-D-glucose. Provides the cells with the ability to utilize trehalose at high osmolarity by splitting it into glucose molecules that can subsequently be taken up by the phosphotransferase-mediated uptake system. The chain is Periplasmic trehalase from Shigella flexneri.